We begin with the raw amino-acid sequence, 82 residues long: Protein transport protein Sec61 subunit beta (82 aa).

Met-1 is modified (N-acetylmethionine). The disordered stretch occupies residues 1-34 (MVGSGAPQRGSAAATASMRRRKPTSGAGGGGASG). Residues 1–55 (MVGSGAPQRGSAAATASMRRRKPTSGAGGGGASGGAAGSMLQFYTDDAPGLKISP) lie on the Cytoplasmic side of the membrane. The chain crosses the membrane as a helical span at residues 56 to 76 (NVVLIMSIGFIAFVAVLHVMG).

Belongs to the SEC61-beta family. As to quaternary structure, heterotrimeric complex composed of SEC61-alpha, SEC61-beta and SEC61-gamma.

It is found in the endoplasmic reticulum membrane. In terms of biological role, necessary for protein translocation in the endoplasmic reticulum. The polypeptide is Protein transport protein Sec61 subunit beta (Arabidopsis thaliana (Mouse-ear cress)).